Here is a 346-residue protein sequence, read N- to C-terminus: MTRVISGEPQHGDLAPADRALRPQTLAEFVGQEQAKGNLRVFIEAAKGRGEALDHVLLFGPPGLGKTTLAQIVARELGVNFRATSGPVLNKPGDLAAILTNLEANDVLFIDEIHRLSSNVEEILYPAMEDHVLDLVIGEGPSARSIRIDLAPFTLVAATTRAGMLATPLRDRFGIPIRLEFYTPAELRHVLQHAARKMGAPLTDDGADEIAKRARGTPRVAGRLLRRVRDFATADGADRIDRKAAAMALARLEVDESGLDSLDRRYLRAMIENYGGGPVGVETIAYAIAEARDAVEDVIEPYLMQQGFIQRTPRGRMACGKAYLHLGLTPPAAPPGQAQGALFDEG.

Positions 1 to 182 are large ATPase domain (RuvB-L); the sequence is MTRVISGEPQ…FGIPIRLEFY (182 aa). Positions 21, 22, 63, 66, 67, 68, 172, 182, and 219 each coordinate ATP. A Mg(2+)-binding site is contributed by threonine 67. Residues 183–253 are small ATPAse domain (RuvB-S); it reads TPAELRHVLQ…AAAMALARLE (71 aa). The tract at residues 256–346 is head domain (RuvB-H); it reads ESGLDSLDRR…QAQGALFDEG (91 aa). Residues arginine 292, arginine 311, and arginine 316 each coordinate DNA.

This sequence belongs to the RuvB family. Homohexamer. Forms an RuvA(8)-RuvB(12)-Holliday junction (HJ) complex. HJ DNA is sandwiched between 2 RuvA tetramers; dsDNA enters through RuvA and exits via RuvB. An RuvB hexamer assembles on each DNA strand where it exits the tetramer. Each RuvB hexamer is contacted by two RuvA subunits (via domain III) on 2 adjacent RuvB subunits; this complex drives branch migration. In the full resolvosome a probable DNA-RuvA(4)-RuvB(12)-RuvC(2) complex forms which resolves the HJ.

It localises to the cytoplasm. It carries out the reaction ATP + H2O = ADP + phosphate + H(+). Its function is as follows. The RuvA-RuvB-RuvC complex processes Holliday junction (HJ) DNA during genetic recombination and DNA repair, while the RuvA-RuvB complex plays an important role in the rescue of blocked DNA replication forks via replication fork reversal (RFR). RuvA specifically binds to HJ cruciform DNA, conferring on it an open structure. The RuvB hexamer acts as an ATP-dependent pump, pulling dsDNA into and through the RuvAB complex. RuvB forms 2 homohexamers on either side of HJ DNA bound by 1 or 2 RuvA tetramers; 4 subunits per hexamer contact DNA at a time. Coordinated motions by a converter formed by DNA-disengaged RuvB subunits stimulates ATP hydrolysis and nucleotide exchange. Immobilization of the converter enables RuvB to convert the ATP-contained energy into a lever motion, pulling 2 nucleotides of DNA out of the RuvA tetramer per ATP hydrolyzed, thus driving DNA branch migration. The RuvB motors rotate together with the DNA substrate, which together with the progressing nucleotide cycle form the mechanistic basis for DNA recombination by continuous HJ branch migration. Branch migration allows RuvC to scan DNA until it finds its consensus sequence, where it cleaves and resolves cruciform DNA. The sequence is that of Holliday junction branch migration complex subunit RuvB from Caulobacter vibrioides (strain ATCC 19089 / CIP 103742 / CB 15) (Caulobacter crescentus).